Consider the following 452-residue polypeptide: CASP-like protein 4A1 (452 aa).

A compositionally biased stretch (basic and acidic residues) spans 1 to 17; that stretch reads MGLRDSLKEREDRRSSE. Disordered stretches follow at residues 1–39, 71–147, and 164–283; these read MGLR…RKES, RAGP…ARSS, and AKYV…VQFR. Topologically, residues 1–305 are cytoplasmic; that stretch reads MGLRDSLKER…KRRAAAMQRT (305 aa). Over residues 25 to 34 the composition is skewed to polar residues; sequence SWMTRESTTG. 2 stretches are compositionally biased toward low complexity: residues 105 to 126 and 190 to 205; these read QAQA…TGSG and GWYS…AAPP. Residues 211-272 show a composition bias toward pro residues; that stretch reads DPPPAPPRRQ…TAPAPAPVPA (62 aa). A helical transmembrane segment spans residues 306–326; that stretch reads ALLARGAAAGLCLAALAVLAA. Over 327 to 347 the chain is Extracellular; sequence DTRKGWARDSYSNYTQFRYSE. Asparagine 339 carries an N-linked (GlcNAc...) asparagine glycan. A helical membrane pass occupies residues 348–368; sequence AVNVIGFIYSVFQFVALVELM. At 369-389 the chain is on the cytoplasmic side; the sequence is RRNKHLIPHPKRDLFDFTMDQ. A helical transmembrane segment spans residues 390–406; the sequence is VLTYLLISSSSSATARV. The Extracellular segment spans residues 407 to 423; the sequence is SDLIDNWGSDPFPSMAN. N-linked (GlcNAc...) asparagine glycosylation is present at asparagine 423. Residues 424 to 444 form a helical membrane-spanning segment; the sequence is GSIAISFLAFAVFAICSLISA. Topologically, residues 445–452 are cytoplasmic; the sequence is YNLFRRDV.

It belongs to the Casparian strip membrane proteins (CASP) family. As to quaternary structure, homodimer and heterodimers.

It is found in the cell membrane. This chain is CASP-like protein 4A1, found in Sorghum bicolor (Sorghum).